Here is a 261-residue protein sequence, read N- to C-terminus: Small ribosomal subunit protein uS3 (261 aa).

Residues 39–107 (VREYLKRKLA…PVHVSIEEIR (69 aa)) enclose the KH type-2 domain. Positions 213–261 (QPVAEEPAADDRRPRRTPGRPDGDKPRTRTVKKVDGAADPAKRVRKAGA) are disordered. Basic and acidic residues predominate over residues 221–254 (ADDRRPRRTPGRPDGDKPRTRTVKKVDGAADPAK).

Belongs to the universal ribosomal protein uS3 family. In terms of assembly, part of the 30S ribosomal subunit. Forms a tight complex with proteins S10 and S14.

Functionally, binds the lower part of the 30S subunit head. Binds mRNA in the 70S ribosome, positioning it for translation. In Dechloromonas aromatica (strain RCB), this protein is Small ribosomal subunit protein uS3.